Consider the following 559-residue polypeptide: CCR4-NOT transcription complex subunit 6-like (559 aa).

The segment at 1–148 is required for interaction with cnot1, cnot3 and cnot7; it reads MPKEKYDPPD…LYQEPDGTRK (148 aa). The nuclease domain stretch occupies residues 1–550; it reads MPKEKYDPPD…NGLHLPVHST (550 aa). LRR repeat units lie at residues 52 to 73, 75 to 96, 98 to 120, and 121 to 143; these read HLTA…IAKL, HLVY…LGNM, TLRE…GRLF, and QLQT…YQEP. Glu235 contacts Mg(2+). Positions 235, 271, 353, and 358 each coordinate substrate. Asp405 serves as a coordination point for Mg(2+). The active-site Proton donor/acceptor is Asp405. 3 residues coordinate substrate: Asn407, Asn474, and Phe479.

Belongs to the CCR4/nocturin family. As to quaternary structure, component of the CCR4-NOT complex. Mg(2+) serves as cofactor.

The protein resides in the cytoplasm. The protein localises to the nucleus. The catalysed reaction is Exonucleolytic cleavage of poly(A) to 5'-AMP.. In terms of biological role, poly(A) nuclease with 3'-5' RNase activity. Catalytic component of the CCR4-NOT complex which is one of the major cellular mRNA deadenylases and is linked to various cellular processes including bulk mRNA degradation, miRNA-mediated repression, translational repression during translational initiation and general transcription regulation. Additional complex functions may be a consequence of its influence on mRNA expression. This is CCR4-NOT transcription complex subunit 6-like (cnot6l) from Danio rerio (Zebrafish).